Here is a 331-residue protein sequence, read N- to C-terminus: Probable protein phosphatase 2C 72 (331 aa).

Residues 43–324 (LGSVCSIQGT…DDITVICLFL (282 aa)) form the PPM-type phosphatase domain. Residues Asp78, Gly79, Asp268, and Asp315 each coordinate Mn(2+).

The protein belongs to the PP2C family. Requires Mg(2+) as cofactor. Mn(2+) serves as cofactor.

The catalysed reaction is O-phospho-L-seryl-[protein] + H2O = L-seryl-[protein] + phosphate. It catalyses the reaction O-phospho-L-threonyl-[protein] + H2O = L-threonyl-[protein] + phosphate. The protein is Probable protein phosphatase 2C 72 of Arabidopsis thaliana (Mouse-ear cress).